A 469-amino-acid chain; its full sequence is MASFCASKFLPGLLMLGLGLAVALASSTPTLSLLKDNLKVMNMPLGDWLHILATNFTNFVASQTLLTLTIFGVASFILRYLYQLFLKPLNLDRALGDVGYVLDGKKKRDVVNDIRRRRKSGDLPPIYPNGWIPLVASQDLVKGDVKYISAVGNEFAVYRGEDGEAYAVDAYCPHLGANMAIGGMVKGNCLTCPFHGWVFEGKEGKCVDIPYQEKGKSVPAQAKVKSWSVIEQNGFVLVWHDVEGREPSWFPENIEEEKWGKMYYHGTTKHTVCAHVEEISENGADCAHLTFVHGAFMGSGNDLRYMGSKLWSWASHSWGGKWEQDPDHKHVGVMTVYHAFSLFGMPIEVTRTESTARQNGPAHVLLSFSLPFGKATIAIGVTPIEPLTQIVTQHVYASRFIPRWLAKSFLYAEYVQFERDIMVWNYKTYQRKPLLVFEDRLISKHRRWYSQFFSENSPKFEDMKKTLDW.

The N-terminal stretch at 1–25 is a signal peptide; the sequence is MASFCASKFLPGLLMLGLGLAVALA. Residues 58–78 traverse the membrane as a helical segment; it reads NFVASQTLLTLTIFGVASFIL. The region spanning 132–238 is the Rieske domain; the sequence is IPLVASQDLV…VIEQNGFVLV (107 aa). [2Fe-2S] cluster contacts are provided by C172, H174, C192, and H195.

The protein belongs to the cholesterol 7-desaturase family. [2Fe-2S] cluster is required as a cofactor.

It is found in the membrane. It catalyses the reaction cholesterol + NADPH + O2 + H(+) = 7-dehydrocholesterol + NADP(+) + 2 H2O. The catalysed reaction is cholesterol + NADH + O2 + H(+) = 7-dehydrocholesterol + NAD(+) + 2 H2O. Its pathway is steroid hormone biosynthesis; dafachronic acid biosynthesis. Catalyzes the production of 7-dehydrocholesterol (7-DHC or cholesta-5,7-dien-3beta-ol) by inserting a double bond (desaturating) at the C7-C8 single bond of cholesterol. Essential regulator of steroid biosynthesis as this reaction is the first step in the synthesis of the steroid hormone Delta(7)-dafachronic acid. This Hemicentrotus pulcherrimus (Sea urchin) protein is Cholesterol 7-desaturase nvd.